The sequence spans 108 residues: Large ribosomal subunit protein uL24 (108 aa).

The segment at 46-65 (RHTRVQQSSRGSQSGGIVTQ) is disordered. Residues 51–61 (QQSSRGSQSGG) are compositionally biased toward low complexity.

It belongs to the universal ribosomal protein uL24 family. Part of the 50S ribosomal subunit.

In terms of biological role, one of two assembly initiator proteins, it binds directly to the 5'-end of the 23S rRNA, where it nucleates assembly of the 50S subunit. Functionally, one of the proteins that surrounds the polypeptide exit tunnel on the outside of the subunit. The polypeptide is Large ribosomal subunit protein uL24 (Parafrankia sp. (strain EAN1pec)).